We begin with the raw amino-acid sequence, 260 residues long: Adenosylcobinamide-GDP ribazoletransferase (260 aa).

6 helical membrane passes run 7–27, 45–65, 117–137, 145–165, 187–207, and 210–230; these read WYFL…TRLP, LMGL…HWLG, AYGV…LASF, WALI…IALY, LLLG…ALAI, and WLIL…GRWF.

The protein belongs to the CobS family. Requires Mg(2+) as cofactor.

The protein resides in the cell inner membrane. It catalyses the reaction alpha-ribazole + adenosylcob(III)inamide-GDP = adenosylcob(III)alamin + GMP + H(+). It carries out the reaction alpha-ribazole 5'-phosphate + adenosylcob(III)inamide-GDP = adenosylcob(III)alamin 5'-phosphate + GMP + H(+). The protein operates within cofactor biosynthesis; adenosylcobalamin biosynthesis; adenosylcobalamin from cob(II)yrinate a,c-diamide: step 7/7. Joins adenosylcobinamide-GDP and alpha-ribazole to generate adenosylcobalamin (Ado-cobalamin). Also synthesizes adenosylcobalamin 5'-phosphate from adenosylcobinamide-GDP and alpha-ribazole 5'-phosphate. The protein is Adenosylcobinamide-GDP ribazoletransferase of Synechocystis sp. (strain ATCC 27184 / PCC 6803 / Kazusa).